The following is a 154-amino-acid chain: Large ribosomal subunit protein uL13 (154 aa).

The protein belongs to the universal ribosomal protein uL13 family. Part of the 50S ribosomal subunit.

Functionally, this protein is one of the early assembly proteins of the 50S ribosomal subunit, although it is not seen to bind rRNA by itself. It is important during the early stages of 50S assembly. The sequence is that of Large ribosomal subunit protein uL13 from Rhodospirillum centenum (strain ATCC 51521 / SW).